The sequence spans 61 residues: DNA-binding protein 7a (61 aa).

Residues 37–61 (NGKTGRGAVSEKDAPKELLEKLEKK) form a disordered region. The span at 45-61 (VSEKDAPKELLEKLEKK) shows a compositional bias: basic and acidic residues.

This sequence belongs to the 7 kDa DNA-binding/endoribonuclease P2 family. As to quaternary structure, monomer.

Its subcellular location is the cytoplasm. Functionally, can constrain negative DNA supercoils. May be involved in maintaining the integrity of the genome at high temperature. This chain is DNA-binding protein 7a, found in Acidianus hospitalis (strain W1).